The chain runs to 293 residues: Small ribosomal subunit protein uS2m (293 aa).

Positions 21 to 38 (GRAAQRGRTLGSAAAAAA) are enriched in low complexity. Disordered regions lie at residues 21 to 49 (GRAA…DRSA) and 263 to 293 (QGAP…GHSP). The span at 39 to 49 (REPERDSDRSA) shows a compositional bias: basic and acidic residues. A compositionally biased stretch (pro residues) spans 267–279 (GPHPANPAAPGAP).

It belongs to the universal ribosomal protein uS2 family. In terms of assembly, component of the mitochondrial ribosome small subunit (28S) which comprises a 12S rRNA and about 30 distinct proteins.

Its subcellular location is the mitochondrion. Its function is as follows. Required for mitoribosome formation and stability, and mitochondrial translation. The chain is Small ribosomal subunit protein uS2m (MRPS2) from Bos taurus (Bovine).